Here is a 639-residue protein sequence, read N- to C-terminus: Chaperone protein DnaK (639 aa).

Thr198 is modified (phosphothreonine; by autocatalysis). The interval 604-639 (KSQAQGGDNADAGKQANAAADDVVDAEFEEVKDDKK) is disordered. Low complexity predominate over residues 606–624 (QAQGGDNADAGKQANAAAD). Positions 625-639 (DVVDAEFEEVKDDKK) are enriched in acidic residues.

Belongs to the heat shock protein 70 family.

Its function is as follows. Acts as a chaperone. This Shewanella baltica (strain OS223) protein is Chaperone protein DnaK.